A 219-amino-acid polypeptide reads, in one-letter code: tRNA (guanine-N(7)-)-methyltransferase (219 aa).

4 residues coordinate S-adenosyl-L-methionine: E46, E71, D100, and D122. D122 is an active-site residue. Residue K126 participates in substrate binding. Residues 128 to 133 (KHEKRR) are interaction with RNA. Substrate is bound by residues D158 and 199–202 (TEYE).

The protein belongs to the class I-like SAM-binding methyltransferase superfamily. TrmB family.

The catalysed reaction is guanosine(46) in tRNA + S-adenosyl-L-methionine = N(7)-methylguanosine(46) in tRNA + S-adenosyl-L-homocysteine. The protein operates within tRNA modification; N(7)-methylguanine-tRNA biosynthesis. In terms of biological role, catalyzes the formation of N(7)-methylguanine at position 46 (m7G46) in tRNA. This is tRNA (guanine-N(7)-)-methyltransferase from Oenococcus oeni (strain ATCC BAA-331 / PSU-1).